Reading from the N-terminus, the 120-residue chain is Ribonuclease P protein component (120 aa).

This sequence belongs to the RnpA family. Consists of a catalytic RNA component (M1 or rnpB) and a protein subunit.

It carries out the reaction Endonucleolytic cleavage of RNA, removing 5'-extranucleotides from tRNA precursor.. Functionally, RNaseP catalyzes the removal of the 5'-leader sequence from pre-tRNA to produce the mature 5'-terminus. It can also cleave other RNA substrates such as 4.5S RNA. The protein component plays an auxiliary but essential role in vivo by binding to the 5'-leader sequence and broadening the substrate specificity of the ribozyme. This is Ribonuclease P protein component from Chlamydia trachomatis serovar D (strain ATCC VR-885 / DSM 19411 / UW-3/Cx).